The chain runs to 1487 residues: Chromosome partition protein MukB (1487 aa).

34–41 provides a ligand contact to ATP; that stretch reads GGNGAGKS. Coiled-coil stretches lie at residues 297 to 458, 506 to 601, 637 to 666, 781 to 806, 836 to 1109, and 1210 to 1266; these read GSRE…TNAL, RESQ…LEAI, LEQEKELSLAKDKLAERRSQLESEIERLAS, RAAREQRLELLRNEREEVVEKHAKAA, EQAL…ELRT, and VEAI…LSNI. The tract at residues 667-784 is flexible hinge; it reads PGGSNDPRLK…EIPLFGRAAR (118 aa).

The protein belongs to the SMC family. MukB subfamily. As to quaternary structure, homodimerization via its hinge domain. Binds to DNA via its C-terminal region. Interacts, and probably forms a ternary complex, with MukE and MukF via its C-terminal region. The complex formation is stimulated by calcium or magnesium. Interacts with tubulin-related protein FtsZ.

It is found in the cytoplasm. The protein localises to the nucleoid. Its function is as follows. Plays a central role in chromosome condensation, segregation and cell cycle progression. Functions as a homodimer, which is essential for chromosome partition. Involved in negative DNA supercoiling in vivo, and by this means organize and compact chromosomes. May achieve or facilitate chromosome segregation by condensation DNA from both sides of a centrally located replisome during cell division. The sequence is that of Chromosome partition protein MukB from Vibrio parahaemolyticus serotype O3:K6 (strain RIMD 2210633).